A 629-amino-acid chain; its full sequence is tRNA uridine 5-carboxymethylaminomethyl modification enzyme MnmG (629 aa).

Residues 13-18, valine 125, and serine 180 contribute to the FAD site; that span reads GGGHAG. 273-287 provides a ligand contact to NAD(+); the sequence is GPRYCPSIEDKVMRF. Glutamine 370 provides a ligand contact to FAD.

The protein belongs to the MnmG family. As to quaternary structure, homodimer. Heterotetramer of two MnmE and two MnmG subunits. Requires FAD as cofactor.

Its subcellular location is the cytoplasm. In terms of biological role, NAD-binding protein involved in the addition of a carboxymethylaminomethyl (cmnm) group at the wobble position (U34) of certain tRNAs, forming tRNA-cmnm(5)s(2)U34. This Salmonella paratyphi A (strain ATCC 9150 / SARB42) protein is tRNA uridine 5-carboxymethylaminomethyl modification enzyme MnmG.